Here is a 194-residue protein sequence, read N- to C-terminus: MTIKLIVGLANPGAEYAATRHNAGAWYVDLLAERLRAPLREEPKFFGYTSRVTLEGEDVRLLVPTTFMNLSGKAVGAMASFYRIMPDEILVAHDELDLPPGVAKFKLGGGHGGHNGLKDIINKLGNNPNFHRLRVGIGHPGDKNKVVGFVLGKPPVSEQKLIDDAIDEAARCTEVWFKEGLTKATNRLHAFKAQ.

Y16 is a tRNA binding site. The Proton acceptor role is filled by H21. 3 residues coordinate tRNA: F67, N69, and N115.

It belongs to the PTH family. In terms of assembly, monomer.

The protein resides in the cytoplasm. It carries out the reaction an N-acyl-L-alpha-aminoacyl-tRNA + H2O = an N-acyl-L-amino acid + a tRNA + H(+). Functionally, hydrolyzes ribosome-free peptidyl-tRNAs (with 1 or more amino acids incorporated), which drop off the ribosome during protein synthesis, or as a result of ribosome stalling. Its function is as follows. Catalyzes the release of premature peptidyl moieties from peptidyl-tRNA molecules trapped in stalled 50S ribosomal subunits, and thus maintains levels of free tRNAs and 50S ribosomes. This Citrobacter koseri (strain ATCC BAA-895 / CDC 4225-83 / SGSC4696) protein is Peptidyl-tRNA hydrolase.